We begin with the raw amino-acid sequence, 1357 residues long: DNA-directed RNA polymerase subunit beta (1357 aa).

Belongs to the RNA polymerase beta chain family. As to quaternary structure, the RNAP catalytic core consists of 2 alpha, 1 beta, 1 beta' and 1 omega subunit. When a sigma factor is associated with the core the holoenzyme is formed, which can initiate transcription.

The enzyme catalyses RNA(n) + a ribonucleoside 5'-triphosphate = RNA(n+1) + diphosphate. Functionally, DNA-dependent RNA polymerase catalyzes the transcription of DNA into RNA using the four ribonucleoside triphosphates as substrates. This chain is DNA-directed RNA polymerase subunit beta, found in Pseudomonas savastanoi pv. phaseolicola (strain 1448A / Race 6) (Pseudomonas syringae pv. phaseolicola (strain 1448A / Race 6)).